Reading from the N-terminus, the 612-residue chain is Elongation factor 4 (612 aa).

The 183-residue stretch at 11-193 (KHIRNFAIVA…KVVKDIPAPS (183 aa)) folds into the tr-type G domain. GTP is bound by residues 23-28 (DHGKST) and 140-143 (NKID).

Belongs to the TRAFAC class translation factor GTPase superfamily. Classic translation factor GTPase family. LepA subfamily.

It localises to the cell membrane. The catalysed reaction is GTP + H2O = GDP + phosphate + H(+). In terms of biological role, required for accurate and efficient protein synthesis under certain stress conditions. May act as a fidelity factor of the translation reaction, by catalyzing a one-codon backward translocation of tRNAs on improperly translocated ribosomes. Back-translocation proceeds from a post-translocation (POST) complex to a pre-translocation (PRE) complex, thus giving elongation factor G a second chance to translocate the tRNAs correctly. Binds to ribosomes in a GTP-dependent manner. In Lactobacillus helveticus (strain DPC 4571), this protein is Elongation factor 4.